The following is a 278-amino-acid chain: 2-succinyl-6-hydroxy-2,4-cyclohexadiene-1-carboxylate synthase (278 aa).

Belongs to the AB hydrolase superfamily. MenH family. As to quaternary structure, monomer.

The catalysed reaction is 5-enolpyruvoyl-6-hydroxy-2-succinyl-cyclohex-3-ene-1-carboxylate = (1R,6R)-6-hydroxy-2-succinyl-cyclohexa-2,4-diene-1-carboxylate + pyruvate. Its pathway is quinol/quinone metabolism; 1,4-dihydroxy-2-naphthoate biosynthesis; 1,4-dihydroxy-2-naphthoate from chorismate: step 3/7. It functions in the pathway quinol/quinone metabolism; menaquinone biosynthesis. In terms of biological role, catalyzes a proton abstraction reaction that results in 2,5-elimination of pyruvate from 2-succinyl-5-enolpyruvyl-6-hydroxy-3-cyclohexene-1-carboxylate (SEPHCHC) and the formation of 2-succinyl-6-hydroxy-2,4-cyclohexadiene-1-carboxylate (SHCHC). This is 2-succinyl-6-hydroxy-2,4-cyclohexadiene-1-carboxylate synthase from Photorhabdus laumondii subsp. laumondii (strain DSM 15139 / CIP 105565 / TT01) (Photorhabdus luminescens subsp. laumondii).